The chain runs to 701 residues: Polyribonucleotide nucleotidyltransferase (701 aa).

Mg(2+) is bound by residues Asp480 and Asp486. The region spanning 547 to 606 (PKIDTIKIDVDKIKVVIGKGGETIDKIIAETGVKIDIDDEGNVSIYSSDQAAINRTKEII) is the KH domain. One can recognise an S1 motif domain in the interval 616–684 (GEVYHAKVVR…EKGRVDASMK (69 aa)). The tract at residues 682–701 (SMKALIPRPPKPEKKEEKHD) is disordered. Basic and acidic residues predominate over residues 691 to 701 (PKPEKKEEKHD).

This sequence belongs to the polyribonucleotide nucleotidyltransferase family. The cofactor is Mg(2+).

The protein resides in the cytoplasm. It catalyses the reaction RNA(n+1) + phosphate = RNA(n) + a ribonucleoside 5'-diphosphate. Involved in mRNA degradation. Catalyzes the phosphorolysis of single-stranded polyribonucleotides processively in the 3'- to 5'-direction. In Streptococcus pyogenes serotype M12 (strain MGAS2096), this protein is Polyribonucleotide nucleotidyltransferase.